The chain runs to 241 residues: Tumor necrosis factor receptor superfamily member grnd (241 aa).

The signal sequence occupies residues 1-27 (MSVRKLSALSLSIGGVPLIPSVSLVAA). At 28–98 (ANGESRDCHG…EMLDIQNTQQ (71 aa)) the chain is on the extracellular side. 4 disulfides stabilise this stretch: Cys-35–Cys-47, Cys-40–Cys-54, Cys-57–Cys-77, and Cys-61–Cys-73. An N-linked (GlcNAc...) asparagine glycan is attached at Asn-63. Residues 99 to 119 (LILLLLTILLVLIALRCAFQF) traverse the membrane as a helical segment. Residues 120–241 (LRWLIGNRCF…PSAATIPVAF (122 aa)) lie on the Cytoplasmic side of the membrane.

As to quaternary structure, interacts (via extracellular cysteine-rich domain) with egr (via secreted TNF-homology soluble form); forms heterohexamers when 3 copies associate with egr trimers. Interacts with Traf6/TRAF2 and veli (via PDZ domain). N-glycosylated on Asn-63. Glycosylation regulates ligand binding, specifically reducing affinity for the TNF egr, thereby inhibiting activation of JNK signaling. Expressed in the adult midgut; under normal conditions expressed at lower levels than the other TNF receptor wgn.

It localises to the apical cell membrane. The protein localises to the cytoplasmic vesicle membrane. In terms of biological role, acts as a receptor for TNF-cytokine egr. Plays a role in activation of JNK signaling and is required for egr-induced apoptosis, including in wing imaginal discs during development. May also play an egr-independent role in cell proliferation. TNF receptor involved in triggering JNK-dependent proliferation of the enteroblast-enterocyte lineage in response to stress-induced release of egr by intestinal stem cells and enteroblasts. Involved in regulation of insulin production in response to dietary protein shortage keeping systemic growth in check. Activation in brain insulin producing cells through binding of egr released into the hemolymph in response to dietary amino acid shortage, results in JNK-dependent inhibition of insulin production. The sequence is that of Tumor necrosis factor receptor superfamily member grnd from Drosophila melanogaster (Fruit fly).